Here is a 382-residue protein sequence, read N- to C-terminus: TAGYEDEPSHTVTTVIVPHNAKSGQLVNYLAYIDSNGAQCAPSYSMRQGSKFLNDDLLNYQQLLFSTFLNEGWILTIPDYQGPQRAFAAGRLEGRMSLDGIRAALNFGEIGLEKNTSVVTYGYSGGAIASGWTAALQASYAPEINAIGFAMGGTPANVTSTVQSLDKGVFSGLCVAGITGIIYAYQVVQDWFQNHLYPKGNDAIEYARSHCITDIFSRYPFSHVFSDDFFRNGSSILYDPTIQSVISDIVLGLKESETPKAPVYMFHSQHDEIVPFSDARKTSHNWAKHGADVFFQEFSDLPIGHALSEITNIPNSLFFVRDRFAGKPFPKGYTRKVTGNGLEEPNASLAGLGELVRAIQDIQGREVGPADSELKQFILDRN.

A disulfide bridge links Cys-40 with Cys-211. An N-linked (GlcNAc...) asparagine glycan is attached at Asn-115. Ser-124 acts as the Nucleophile in catalysis. N-linked (GlcNAc...) asparagine glycans are attached at residues Asn-157 and Asn-232. Residues Asp-271 and His-305 contribute to the active site. N-linked (GlcNAc...) asparagine glycosylation is present at Asn-346.

It belongs to the AB hydrolase superfamily. Lipase family. Class Lip subfamily.

Its subcellular location is the secreted. It carries out the reaction a triacylglycerol + H2O = a diacylglycerol + a fatty acid + H(+). The catalysed reaction is a monoacylglycerol + H2O = glycerol + a fatty acid + H(+). It catalyses the reaction a diacylglycerol + H2O = a monoacylglycerol + a fatty acid + H(+). Secreted lipase that hydrolyzes acylglycerol lipids such as triacylglycerols and consequently releases free fatty acid. Can hydrolyze 4-nitrophenyl palmitate to release 4-nitrophenol and palmitoic acid. Due to an absence of fatty acid synthase genes in Malassezia species, secretory lipases are essential for the yeast to generate free fatty acids from degradation of sebum and assimilate them as lipid sources for growth. Plays important roles not only in lipid metabolism but also in the immune response of host cells and pathogenesis. The polypeptide is Secreted triacylglycerol lipase LIP5 (Malassezia furfur (Pityriasis versicolor infection agent)).